Consider the following 968-residue polypeptide: RNA polymerase-associated protein RapA (968 aa).

The Helicase ATP-binding domain maps to 164–334 (DVGRRHAPRV…FARLRLLDPS (171 aa)). Residue 177-184 (DEVGLGKT) coordinates ATP. The DEAH box signature appears at 280–283 (DEAH). Residues 490–644 (RVEWLMGHLT…TCPTGRAIYD (155 aa)) form the Helicase C-terminal domain.

The protein belongs to the SNF2/RAD54 helicase family. RapA subfamily. As to quaternary structure, interacts with the RNAP. Has a higher affinity for the core RNAP than for the holoenzyme. Its ATPase activity is stimulated by binding to RNAP.

Transcription regulator that activates transcription by stimulating RNA polymerase (RNAP) recycling in case of stress conditions such as supercoiled DNA or high salt concentrations. Probably acts by releasing the RNAP, when it is trapped or immobilized on tightly supercoiled DNA. Does not activate transcription on linear DNA. Probably not involved in DNA repair. In Citrobacter koseri (strain ATCC BAA-895 / CDC 4225-83 / SGSC4696), this protein is RNA polymerase-associated protein RapA.